A 493-amino-acid polypeptide reads, in one-letter code: Exosome complex component Rrp41 (493 aa).

2 disordered regions span residues 244–264 and 291–493; these read VSEE…PSPV and LASE…EKDE. Positions 249 to 259 are enriched in basic and acidic residues; it reads APEKGAEKEVL. The segment covering 297–377 has biased composition (acidic residues); it reads PDFEDELEEE…ALEEETELEA (81 aa). Positions 383-400 are enriched in basic and acidic residues; the sequence is PELKEFDEIEARLEKEDA. Over residues 401–471 the composition is skewed to acidic residues; the sequence is SIEAEEEIEP…EAEEEPEEEK (71 aa). Positions 472–493 are enriched in basic and acidic residues; sequence SEGPWKVVKDPSEAGTRGEKDE.

It belongs to the RNase PH family. Rrp41 subfamily. Component of the archaeal exosome complex. Forms a hexameric ring-like arrangement composed of 3 Rrp41-Rrp42 heterodimers. The hexameric ring associates with a trimer of Rrp4 and/or Csl4 subunits.

Its subcellular location is the cytoplasm. In terms of biological role, catalytic component of the exosome, which is a complex involved in RNA degradation. Has 3'-&gt;5' exoribonuclease activity. Can also synthesize heteromeric RNA-tails. This chain is Exosome complex component Rrp41, found in Methanosarcina mazei (strain ATCC BAA-159 / DSM 3647 / Goe1 / Go1 / JCM 11833 / OCM 88) (Methanosarcina frisia).